A 323-amino-acid polypeptide reads, in one-letter code: Aquaporin-4 (323 aa).

The Cytoplasmic segment spans residues methionine 1–lysine 36. 2 S-palmitoyl cysteine lipidation sites follow: cysteine 13 and cysteine 17. Residues alanine 37–isoleucine 57 traverse the membrane as a helical segment. The Extracellular portion of the chain corresponds to asparagine 58–aspartate 69. A helical transmembrane segment spans residues methionine 70 to glycine 89. Topologically, residues histidine 90–glycine 93 are cytoplasmic. An intramembrane region (discontinuously helical) is located at residues glycine 94–threonine 101. The NPA 1 signature appears at asparagine 97–alanine 99. The Cytoplasmic portion of the chain corresponds to valine 102–serine 115. A Phosphoserine; by PKG modification is found at serine 111. Residues valine 116–valine 136 form a helical membrane-spanning segment. Topologically, residues threonine 137 to threonine 155 are extracellular. A glycan (N-linked (GlcNAc...) asparagine) is linked at asparagine 153. Residues alanine 156–alanine 176 form a helical membrane-spanning segment. Over serine 177–aspartate 184 the chain is Cytoplasmic. A Phosphoserine; by PKC modification is found at serine 180. The helical transmembrane segment at valine 185 to isoleucine 205 threads the bilayer. A glycan (N-linked (GlcNAc...) asparagine) is linked at asparagine 206. The Extracellular segment spans residues asparagine 206–threonine 208. Positions glycine 209 to valine 222 form an intramembrane region, discontinuously helical. The NPA 2 signature appears at asparagine 213–alanine 215. Residues isoleucine 223–tryptophan 231 lie on the Extracellular side of the membrane. The chain crosses the membrane as a helical span at residues isoleucine 232–phenylalanine 252. Residues cysteine 253 to valine 323 are Cytoplasmic-facing. Residues serine 276 and serine 285 each carry the phosphoserine modification. Threonine 289 carries the phosphothreonine modification. Serine 321 bears the Phosphoserine mark.

This sequence belongs to the MIP/aquaporin (TC 1.A.8) family. As to quaternary structure, homotetramer. The tetramers can form oligomeric arrays in membranes. The size of the oligomers differs between tissues and is smaller in skeletal muscle than in brain. Interaction between AQP4 oligomeric arrays in close-by cells can contribute to cell-cell adhesion. Part of a complex containing MLC1, TRPV4, HEPACAM and ATP1B1. Post-translationally, phosphorylation by PKC at Ser-180 reduces conductance by 50%. Phosphorylation by PKG at Ser-111 in response to glutamate increases conductance by 40%. In terms of processing, isoform 2: Palmitoylated on its N-terminal region. Isoform 1: Not palmitoylated. Detected in skeletal muscle. Detected in stomach, along the glandular base region of the fundic gland (at protein level). Detected in brain, lung and skeletal muscle, and at much lower levels in heart and ovary.

Its subcellular location is the cell membrane. It is found in the basolateral cell membrane. The protein resides in the endosome membrane. It localises to the sarcolemma. The protein localises to the cell projection. It catalyses the reaction H2O(in) = H2O(out). Its function is as follows. Forms a water-specific channel. Plays an important role in brain water homeostasis. It is involved in glymphatic solute transport and is required for a normal rate of water exchange across the blood brain interface. Required for normal levels of cerebrospinal fluid influx into the brain cortex and parenchyma along paravascular spaces that surround penetrating arteries, and for normal drainage of interstitial fluid along paravenous drainage pathways. Thereby, it is required for normal clearance of solutes from the brain interstitial fluid, including soluble beta-amyloid peptides derived from APP. Plays a redundant role in urinary water homeostasis and urinary concentrating ability. In Homo sapiens (Human), this protein is Aquaporin-4 (AQP4).